We begin with the raw amino-acid sequence, 582 residues long: 5-aminolevulinate synthase, erythroid-specific, mitochondrial (582 aa).

R158 contacts succinyl-CoA. Pyridoxal 5'-phosphate contacts are provided by C253 and F254. S275 and R294 together coordinate succinyl-CoA. Residues S327, H355, and T383 each contribute to the pyridoxal 5'-phosphate site. Residue K386 is part of the active site. K386 carries the N6-(pyridoxal phosphate)lysine modification. Pyridoxal 5'-phosphate contacts are provided by T415 and T416. T503 is a binding site for succinyl-CoA.

This sequence belongs to the class-II pyridoxal-phosphate-dependent aminotransferase family. In terms of assembly, homodimer. Requires pyridoxal 5'-phosphate as cofactor.

The protein localises to the mitochondrion inner membrane. The enzyme catalyses succinyl-CoA + glycine + H(+) = 5-aminolevulinate + CO2 + CoA. It functions in the pathway porphyrin-containing compound metabolism; protoporphyrin-IX biosynthesis; 5-aminolevulinate from glycine: step 1/1. Catalyzes the pyridoxal 5'-phosphate (PLP)-dependent condensation of succinyl-CoA and glycine to form aminolevulinic acid (ALA), with CoA and CO2 as by-products. Contributes significantly to heme formation during erythropoiesis. The polypeptide is 5-aminolevulinate synthase, erythroid-specific, mitochondrial (alas2) (Opsanus tau (Oyster toadfish)).